Consider the following 64-residue polypeptide: LGVLLPICLLLFPLTALPLDGDQPADRPAERMQDDFITEQHPLFDPVKRCCDWPCNAGCVPCCF.

The N-terminal stretch at 1 to 16 is a signal peptide; it reads LGVLLPICLLLFPLTA. The propeptide occupies 17–49; it reads LPLDGDQPADRPAERMQDDFITEQHPLFDPVKR. 3 disulfides stabilise this stretch: C50–C63, C51–C59, and C55–C62. 4-hydroxyproline is present on P61.

The protein belongs to the conotoxin M superfamily. In terms of tissue distribution, expressed by the venom duct.

It is found in the secreted. This chain is Conotoxin Pu3.4, found in Conus pulicarius (Flea-bitten cone).